We begin with the raw amino-acid sequence, 367 residues long: Peptide chain release factor 2 (367 aa).

N5-methylglutamine is present on Gln-254.

This sequence belongs to the prokaryotic/mitochondrial release factor family. Post-translationally, methylated by PrmC. Methylation increases the termination efficiency of RF2.

The protein localises to the cytoplasm. Functionally, peptide chain release factor 2 directs the termination of translation in response to the peptide chain termination codons UGA and UAA. This Leptospira borgpetersenii serovar Hardjo-bovis (strain JB197) protein is Peptide chain release factor 2.